A 132-amino-acid polypeptide reads, in one-letter code: Glycine cleavage system H protein (132 aa).

A Lipoyl-binding domain is found at 24-106; that stretch reads TVRVGITDFA…YGAGWLLDVQ (83 aa). The residue at position 65 (Lys65) is an N6-lipoyllysine.

Belongs to the GcvH family. As to quaternary structure, the glycine cleavage system is composed of four proteins: P, T, L and H. (R)-lipoate is required as a cofactor.

The glycine cleavage system catalyzes the degradation of glycine. The H protein shuttles the methylamine group of glycine from the P protein to the T protein. The sequence is that of Glycine cleavage system H protein from Mycobacterium avium (strain 104).